The sequence spans 128 residues: MSNVPTELKYALSHEWVRADGDGVYSVGITEHAQELLGDMVFVDLPEVGSDVSAGSDCAVAESVKAASDIYAPISGEIVAVNTELENSPELVNSAPYTDGWLFSIKAADESELDNLLDADAYLAAIEE.

The Lipoyl-binding domain maps to 24–106; the sequence is VYSVGITEHA…YTDGWLFSIK (83 aa). An N6-lipoyllysine modification is found at lysine 65.

It belongs to the GcvH family. In terms of assembly, the glycine cleavage system is composed of four proteins: P, T, L and H. The cofactor is (R)-lipoate.

The glycine cleavage system catalyzes the degradation of glycine. The H protein shuttles the methylamine group of glycine from the P protein to the T protein. The sequence is that of Glycine cleavage system H protein from Yersinia pseudotuberculosis serotype O:1b (strain IP 31758).